The chain runs to 323 residues: tRNA-modifying protein YgfZ (323 aa).

Folate contacts are provided by Trp29 and Trp182.

This sequence belongs to the tRNA-modifying YgfZ family.

It is found in the cytoplasm. In terms of biological role, folate-binding protein involved in regulating the level of ATP-DnaA and in the modification of some tRNAs. It is probably a key factor in regulatory networks that act via tRNA modification, such as initiation of chromosomal replication. This chain is tRNA-modifying protein YgfZ, found in Vibrio cholerae serotype O1 (strain M66-2).